We begin with the raw amino-acid sequence, 186 residues long: Tumor necrosis factor alpha-induced protein 8-like protein 1 (186 aa).

Residues 37-70 (EVLDELYRVTKEYTRNRKEAQKIIKNLIKMVVKL) are a coiled coil.

It belongs to the TNFAIP8 family.

The protein resides in the cytoplasm. This Danio rerio (Zebrafish) protein is Tumor necrosis factor alpha-induced protein 8-like protein 1 (tnfaip8l1).